The primary structure comprises 294 residues: Glyceraldehyde-3-phosphate dehydrogenase (294 aa).

NAD(+) is bound by residues aspartate 19, arginine 63, and threonine 105. D-glyceraldehyde 3-phosphate-binding positions include 134–136 (SCT), threonine 165, 194–195 (TG), and arginine 217. Cysteine 135 serves as the catalytic Nucleophile.

Belongs to the glyceraldehyde-3-phosphate dehydrogenase family. As to quaternary structure, homotetramer.

The protein localises to the cytoplasm. It carries out the reaction D-glyceraldehyde 3-phosphate + phosphate + NAD(+) = (2R)-3-phospho-glyceroyl phosphate + NADH + H(+). It participates in carbohydrate degradation; glycolysis; pyruvate from D-glyceraldehyde 3-phosphate: step 1/5. Functionally, catalyzes the oxidative phosphorylation of glyceraldehyde 3-phosphate (G3P) to 1,3-bisphosphoglycerate (BPG) using the cofactor NAD. The first reaction step involves the formation of a hemiacetal intermediate between G3P and a cysteine residue, and this hemiacetal intermediate is then oxidized to a thioester, with concomitant reduction of NAD to NADH. The reduced NADH is then exchanged with the second NAD, and the thioester is attacked by a nucleophilic inorganic phosphate to produce BPG. The sequence is that of Glyceraldehyde-3-phosphate dehydrogenase (gap) from Shimwellia blattae (Escherichia blattae).